The following is a 434-amino-acid chain: Glutamate-1-semialdehyde 2,1-aminomutase (434 aa).

At Lys-266 the chain carries N6-(pyridoxal phosphate)lysine.

The protein belongs to the class-III pyridoxal-phosphate-dependent aminotransferase family. HemL subfamily. As to quaternary structure, homodimer. The cofactor is pyridoxal 5'-phosphate.

It localises to the cytoplasm. It carries out the reaction (S)-4-amino-5-oxopentanoate = 5-aminolevulinate. It functions in the pathway porphyrin-containing compound metabolism; protoporphyrin-IX biosynthesis; 5-aminolevulinate from L-glutamyl-tRNA(Glu): step 2/2. The protein is Glutamate-1-semialdehyde 2,1-aminomutase of Psychrobacter sp. (strain PRwf-1).